A 371-amino-acid chain; its full sequence is Archaeal glycosylation protein Q (371 aa).

The tract at residues 19-39 (QRSDGSMPAGHNGPYHDPETP) is disordered.

Its subcellular location is the cytoplasm. It participates in cell surface structure biogenesis; S-layer biogenesis. Functionally, putative isomerase involved in the N-glycosylation pathway. Required for the appearance of the methyl ester of hexuronic acid found at position four of the pentasaccharide N-linked to the S-layer glycoprotein. Either involved in preparing the third sugar for attachment of the fourth pentasaccharide subunit or processing the fourth sugar prior to its addition to the lipid-linked trisaccharide. The chain is Archaeal glycosylation protein Q (aglQ) from Haloferax volcanii (strain ATCC 29605 / DSM 3757 / JCM 8879 / NBRC 14742 / NCIMB 2012 / VKM B-1768 / DS2) (Halobacterium volcanii).